A 404-amino-acid chain; its full sequence is Probable thioredoxin reductase ARB_06224 (404 aa).

A signal peptide spans Met1–Ala22. Residue Asp67 to Ala75 coordinates FAD. A disulfide bond links Cys172 and Cys175. N-linked (GlcNAc...) asparagine glycosylation occurs at Asn213. Asp334–Gly343 provides a ligand contact to FAD.

The protein belongs to the class-II pyridine nucleotide-disulfide oxidoreductase family. In terms of assembly, homodimer. FAD serves as cofactor.

The protein localises to the secreted. It carries out the reaction [thioredoxin]-dithiol + NADP(+) = [thioredoxin]-disulfide + NADPH + H(+). This chain is Probable thioredoxin reductase ARB_06224, found in Arthroderma benhamiae (strain ATCC MYA-4681 / CBS 112371) (Trichophyton mentagrophytes).